The chain runs to 191 residues: Glycerol-3-phosphate acyltransferase (191 aa).

The next 5 helical transmembrane spans lie at 3–23 (YLIV…FILT), 51–71 (TLGY…VLYV), 78–98 (YIFI…WLKF), 108–128 (VGIL…SWAV), and 150–170 (YLIV…VLIF).

It belongs to the PlsY family. As to quaternary structure, probably interacts with PlsX.

The protein resides in the cell inner membrane. It catalyses the reaction an acyl phosphate + sn-glycerol 3-phosphate = a 1-acyl-sn-glycero-3-phosphate + phosphate. The protein operates within lipid metabolism; phospholipid metabolism. Its function is as follows. Catalyzes the transfer of an acyl group from acyl-phosphate (acyl-PO(4)) to glycerol-3-phosphate (G3P) to form lysophosphatidic acid (LPA). This enzyme utilizes acyl-phosphate as fatty acyl donor, but not acyl-CoA or acyl-ACP. This Pelagibacter ubique (strain HTCC1062) protein is Glycerol-3-phosphate acyltransferase.